Consider the following 68-residue polypeptide: Large ribosomal subunit protein bL31 (68 aa).

The Zn(2+) site is built by cysteine 16, cysteine 18, cysteine 37, and cysteine 40.

Belongs to the bacterial ribosomal protein bL31 family. Type A subfamily. As to quaternary structure, part of the 50S ribosomal subunit. It depends on Zn(2+) as a cofactor.

Functionally, binds the 23S rRNA. The protein is Large ribosomal subunit protein bL31 of Aquifex aeolicus (strain VF5).